The sequence spans 254 residues: Chymotrypsin-like serine proteinase (254 aa).

An N-terminal signal peptide occupies residues 1–18 (MNALLNILLCTLAATALA). Positions 19 to 23 (EISPN) are cleaved as a propeptide — activation peptide. A Peptidase S1 domain is found at 24–254 (IVGGSNAAAG…SSFYNWVQTQ (231 aa)). Residues cysteine 53 and cysteine 69 are joined by a disulfide bond. Catalysis depends on charge relay system residues histidine 68 and aspartate 117. Cystine bridges form between cysteine 146-cysteine 218, cysteine 181-cysteine 199, and cysteine 208-cysteine 233. The active-site Charge relay system is serine 212.

Belongs to the peptidase S1 family. In terms of assembly, monomer. Expressed specifically in the distal quarter of the intestine.

Its subcellular location is the secreted. The protein resides in the extracellular space. With respect to regulation, activated by an autocatalytic mechanism. Its function is as follows. Specificity similar to chymotrypsin. This is Chymotrypsin-like serine proteinase from Haliotis rufescens (California red abalone).